The chain runs to 372 residues: Trihelix transcription factor GT-4 (372 aa).

The 65-residue stretch at 47 to 111 folds into the Myb-like domain; it reads APKKRAETWA…MCTDKWRNIL (65 aa). At serine 167 the chain carries Phosphoserine.

The protein localises to the nucleus. In terms of biological role, probable transcription factor that binds specific DNA sequence. This is Trihelix transcription factor GT-4 (GT-4) from Arabidopsis thaliana (Mouse-ear cress).